Consider the following 202-residue polypeptide: Small ribosomal subunit protein uS4c (202 aa).

One can recognise an S4 RNA-binding domain in the interval 90 to 148 (MRLDNVIFRLGMSSTIPGARQLVNHRHIMINDEMVDTPGYNCKPRDIITLKNISESRSG).

The protein belongs to the universal ribosomal protein uS4 family. Part of the 30S ribosomal subunit. Contacts protein S5. The interaction surface between S4 and S5 is involved in control of translational fidelity.

Its subcellular location is the plastid. The protein resides in the chloroplast. Its function is as follows. One of the primary rRNA binding proteins, it binds directly to 16S rRNA where it nucleates assembly of the body of the 30S subunit. In terms of biological role, with S5 and S12 plays an important role in translational accuracy. This chain is Small ribosomal subunit protein uS4c (rps4), found in Haplomitrium hookeri (Hooker's flapwort).